Consider the following 133-residue polypeptide: MLSDPIADMLTRIRNATRTHKETVDIPASKFKEELAKLLVREGYVQGVERTRPEGQKFDVLRVTLKYGEKREQVIKHIERVSRPGRRAYVSAENLPRVQRGLGVAVVSTSRGLLPDREARQQGVGGEVVCVLW.

This sequence belongs to the universal ribosomal protein uS8 family. In terms of assembly, part of the 30S ribosomal subunit. Contacts proteins S5 and S12.

Its function is as follows. One of the primary rRNA binding proteins, it binds directly to 16S rRNA central domain where it helps coordinate assembly of the platform of the 30S subunit. The chain is Small ribosomal subunit protein uS8 from Deinococcus radiodurans (strain ATCC 13939 / DSM 20539 / JCM 16871 / CCUG 27074 / LMG 4051 / NBRC 15346 / NCIMB 9279 / VKM B-1422 / R1).